The chain runs to 251 residues: MAHRLQMRLLTWDVKDTLIKLRRPVGEEYASKARAHGVVVEDITVEQAFRQAYRAQSHNFPNYGLSRGLTSRQWWKDVVLHTFRLAGVPDAQAMTPVADQLYEDFSSPFTWQVLEGAEMTLKGCRKRGLKLAVVSNFDRRLEDILTGLGLREHFDFVLTSEAVGCPKPDPRIFREALQRACVEPAVAAHVGDSYLCDYQGSQAVGMHSFLVAGSEPLDSAVRDSVPKEHILPSLSHLLPALDLLEASSPMS.

Position 15 is an N6-acetyllysine; alternate (Lys15). The residue at position 15 (Lys15) is an N6-succinyllysine; alternate. An N6-acetyllysine modification is found at Lys130.

It belongs to the HAD-like hydrolase superfamily.

This is Haloacid dehalogenase-like hydrolase domain-containing protein 3 (Hdhd3) from Mus musculus (Mouse).